A 426-amino-acid polypeptide reads, in one-letter code: ATP-dependent Clp protease ATP-binding subunit ClpX (426 aa).

The ClpX-type ZB domain occupies 1-52 (MNEIKKRCSFCNKEESLDNPIINSGITPDVYICNYCLIVGSEILTGYLNKNP). Zn(2+)-binding residues include Cys8, Cys11, Cys33, and Cys36. 129–136 (PTGSGKTL) is a binding site for ATP.

It belongs to the ClpX chaperone family. As to quaternary structure, component of the ClpX-ClpP complex. Forms a hexameric ring that, in the presence of ATP, binds to fourteen ClpP subunits assembled into a disk-like structure with a central cavity, resembling the structure of eukaryotic proteasomes.

ATP-dependent specificity component of the Clp protease. It directs the protease to specific substrates. Can perform chaperone functions in the absence of ClpP. This is ATP-dependent Clp protease ATP-binding subunit ClpX from Helicobacter hepaticus (strain ATCC 51449 / 3B1).